A 428-amino-acid chain; its full sequence is Probable pectin lyase F (428 aa).

Positions 1 to 20 are cleaved as a signal peptide; that stretch reads MVLLHPLLTAAALLGASARA. C83 and C107 are joined by a disulfide. Residue R257 is part of the active site. An N-linked (GlcNAc...) asparagine glycan is attached at N276. Cysteines 324 and 332 form a disulfide. 2 disordered regions span residues 337-367 and 383-428; these read LTSS…MTTD and GSGG…HHHY. Residues 389-417 are compositionally biased toward low complexity; sequence AASSSASITPSPTSSAIPSSSATPSSSAY. The span at 418 to 428 shows a compositional bias: basic residues; sequence ARRHYARHHHY.

Belongs to the polysaccharide lyase 1 family.

It is found in the secreted. The enzyme catalyses Eliminative cleavage of (1-&gt;4)-alpha-D-galacturonan methyl ester to give oligosaccharides with 4-deoxy-6-O-methyl-alpha-D-galact-4-enuronosyl groups at their non-reducing ends.. Functionally, pectinolytic enzymes consist of four classes of enzymes: pectin lyase, polygalacturonase, pectin methylesterase and rhamnogalacturonase. Among pectinolytic enzymes, pectin lyase is the most important in depolymerization of pectin, since it cleaves internal glycosidic bonds of highly methylated pectins. This Aspergillus flavus (strain ATCC 200026 / FGSC A1120 / IAM 13836 / NRRL 3357 / JCM 12722 / SRRC 167) protein is Probable pectin lyase F (pelF).